The primary structure comprises 453 residues: Homeobox protein meis3 (453 aa).

The segment at 33-64 (HHSLSQSAPYGSTGAAHRVPMPPGMGSNDGLK) is disordered. The region spanning 102-185 (GGDVCSSDSF…PIDLVIDDRD (84 aa)) is the MEIS N-terminal domain. Positions 192–272 (LEDFTGSCTS…RDKKRNKKRG (81 aa)) are disordered. A compositionally biased stretch (polar residues) spans 197-209 (GSCTSLSDQNNSW). Positions 218-230 (STHSGTPGPSSGG) are enriched in low complexity. A compositionally biased stretch (polar residues) spans 231–242 (LASQSGDNSSEQ). A DNA-binding region (homeobox) is located at residues 267-329 (RNKKRGIFPK…NARRRIVQPM (63 aa)).

The protein belongs to the TALE/MEIS homeobox family.

It is found in the nucleus. In terms of biological role, a caudalizing protein which is required to pattern the anterior/posterior (A/P) axis during central nervous system (CNS) formation. Inhibits anterior neural expression and acts as a transcriptional activator to induce posterior neural gene expression. Maintains a proper A/P balance required for hindbrain formation by activating the FGF/MAPK pathway, which modulates the planar cell polarity (PCP) pathway. Interacts with retinoid signaling during hindbrain patterning. This Xenopus tropicalis (Western clawed frog) protein is Homeobox protein meis3.